We begin with the raw amino-acid sequence, 615 residues long: Chaperone protein HscA homolog (615 aa).

This sequence belongs to the heat shock protein 70 family.

Functionally, chaperone involved in the maturation of iron-sulfur cluster-containing proteins. Has a low intrinsic ATPase activity which is markedly stimulated by HscB. This chain is Chaperone protein HscA homolog, found in Aeromonas hydrophila subsp. hydrophila (strain ATCC 7966 / DSM 30187 / BCRC 13018 / CCUG 14551 / JCM 1027 / KCTC 2358 / NCIMB 9240 / NCTC 8049).